We begin with the raw amino-acid sequence, 86 residues long: Putative defensin-like protein 9 (86 aa).

An N-terminal signal peptide occupies residues 1–29 (MKSSMQLISTLFFLVILVVAPGMKMVVEG). At glutamine 30 the chain carries Pyrrolidone carboxylic acid. 4 cysteine pairs are disulfide-bonded: cysteine 34–cysteine 79, cysteine 45–cysteine 65, cysteine 51–cysteine 73, and cysteine 55–cysteine 75.

The protein belongs to the DEFL family.

The protein resides in the secreted. This chain is Putative defensin-like protein 9 (LCR76), found in Arabidopsis thaliana (Mouse-ear cress).